Consider the following 253-residue polypeptide: tRNA pseudouridine synthase A (253 aa).

Catalysis depends on D52, which acts as the Nucleophile. Position 110 (Y110) interacts with substrate.

The protein belongs to the tRNA pseudouridine synthase TruA family. Homodimer.

The enzyme catalyses uridine(38/39/40) in tRNA = pseudouridine(38/39/40) in tRNA. Formation of pseudouridine at positions 38, 39 and 40 in the anticodon stem and loop of transfer RNAs. The sequence is that of tRNA pseudouridine synthase A from Thermus thermophilus (strain ATCC BAA-163 / DSM 7039 / HB27).